The sequence spans 163 residues: Phosphopantetheine adenylyltransferase (163 aa).

Thr9 is a binding site for substrate. ATP contacts are provided by residues 9 to 10 and His17; that span reads TF. Lys41, Leu73, and Arg87 together coordinate substrate. ATP is bound by residues 88–90, Glu98, and 123–129; these read GLR and YQFISGT.

The protein belongs to the bacterial CoaD family. As to quaternary structure, homohexamer. Mg(2+) serves as cofactor.

It is found in the cytoplasm. It carries out the reaction (R)-4'-phosphopantetheine + ATP + H(+) = 3'-dephospho-CoA + diphosphate. It functions in the pathway cofactor biosynthesis; coenzyme A biosynthesis; CoA from (R)-pantothenate: step 4/5. In terms of biological role, reversibly transfers an adenylyl group from ATP to 4'-phosphopantetheine, yielding dephospho-CoA (dPCoA) and pyrophosphate. This Herminiimonas arsenicoxydans protein is Phosphopantetheine adenylyltransferase.